The sequence spans 278 residues: 3-methyl-2-oxobutanoate hydroxymethyltransferase (278 aa).

Residues Asp52 and Asp91 each coordinate Mg(2+). 3-methyl-2-oxobutanoate is bound by residues 52-53 (DS), Asp91, and Lys121. Position 123 (Glu123) interacts with Mg(2+). Glu190 (proton acceptor) is an active-site residue.

The protein belongs to the PanB family. Homodecamer; pentamer of dimers. Mg(2+) serves as cofactor.

It is found in the cytoplasm. It carries out the reaction 3-methyl-2-oxobutanoate + (6R)-5,10-methylene-5,6,7,8-tetrahydrofolate + H2O = 2-dehydropantoate + (6S)-5,6,7,8-tetrahydrofolate. Its pathway is cofactor biosynthesis; (R)-pantothenate biosynthesis; (R)-pantoate from 3-methyl-2-oxobutanoate: step 1/2. Catalyzes the reversible reaction in which hydroxymethyl group from 5,10-methylenetetrahydrofolate is transferred onto alpha-ketoisovalerate to form ketopantoate. The protein is 3-methyl-2-oxobutanoate hydroxymethyltransferase of Rhodospirillum rubrum (strain ATCC 11170 / ATH 1.1.1 / DSM 467 / LMG 4362 / NCIMB 8255 / S1).